The following is a 285-amino-acid chain: Ribonuclease Z (285 aa).

Residues His-61, His-63, Asp-65, His-66, His-152, Asp-175, and His-239 each coordinate Zn(2+). The active-site Proton acceptor is Asp-65.

Belongs to the RNase Z family. Homodimer. Zn(2+) serves as cofactor.

It catalyses the reaction Endonucleolytic cleavage of RNA, removing extra 3' nucleotides from tRNA precursor, generating 3' termini of tRNAs. A 3'-hydroxy group is left at the tRNA terminus and a 5'-phosphoryl group is left at the trailer molecule.. Zinc phosphodiesterase, which displays some tRNA 3'-processing endonuclease activity. Probably involved in tRNA maturation, by removing a 3'-trailer from precursor tRNA. The polypeptide is Ribonuclease Z (Mycobacterium sp. (strain JLS)).